A 365-amino-acid chain; its full sequence is Phosphatidylcholine:ceramide cholinephosphotransferase 2 (365 aa).

Residues 1–14 (MDIIETAKLEEHLE) are compositionally biased toward basic and acidic residues. The disordered stretch occupies residues 1-52 (MDIIETAKLEEHLENQPSDPTNTYARPAEPVEEENKNGNGKPKSLSSGLRKG). The span at 15 to 24 (NQPSDPTNTY) shows a compositional bias: polar residues. 4 consecutive transmembrane segments (helical) span residues 80–100 (GIAFIYAVFNLVLTTVMITVV), 128–148 (FSVSEINGIILVGLWITQWLF), 159–179 (FCFIIGTLYLYRCITMYVTTL), and 206–226 (LISGGGLSITGSHILCGDFLF). His229 is a catalytic residue. The chain crosses the membrane as a helical span at residues 248–268 (FWWYHLICWLLSAAGIICILV). Residues His272 and Asp276 contribute to the active site. A helical transmembrane segment spans residues 275–295 (IDVIIAYYITTRLFWWYHSMA). Topologically, residues 296–365 (NEKNLKVSSQ…KIGEDNEKST (70 aa)) are cytoplasmic. S-palmitoyl cysteine attachment occurs at residues Cys331, Cys332, Cys343, and Cys348.

The protein belongs to the sphingomyelin synthase family. In terms of processing, palmitoylated on Cys-331, Cys-332, Cys-343 and Cys-348; which plays an important role in plasma membrane localization. Brain, heart, kidney, liver, muscle and stomach. Also expressed in a number of cell lines such as carcinoma HeLa cells, hepatoma Hep-G2 cells, and colon carcinoma Caco-2 cells.

It localises to the cell membrane. The protein localises to the golgi apparatus membrane. It carries out the reaction an N-acylsphing-4-enine + a 1,2-diacyl-sn-glycero-3-phosphocholine = a sphingomyelin + a 1,2-diacyl-sn-glycerol. It catalyses the reaction an N-acylsphinganine + a 1,2-diacyl-sn-glycero-3-phosphocholine = an N-acylsphinganine-1-phosphocholine + a 1,2-diacyl-sn-glycerol. The enzyme catalyses an N-acyl-(4R)-4-hydroxysphinganine + a 1,2-diacyl-sn-glycero-3-phosphocholine = an N-acyl-(4R)-4-hydroxysphinganine-phosphocholine + a 1,2-diacyl-sn-glycerol. The catalysed reaction is an N-acylsphinganine + a 1,2-diacyl-sn-glycero-3-phosphoethanolamine = an N-acylsphinganine-1-phosphoethanolamine + a 1,2-diacyl-sn-glycerol. It carries out the reaction an N-acyl-(4R)-4-hydroxysphinganine + a 1,2-diacyl-sn-glycero-3-phosphoethanolamine = an N-acyl-(4R)-4-hydroxysphinganine-1-phosphoethanolamine + a 1,2-diacyl-sn-glycerol. It catalyses the reaction an N-acylsphing-4-enine + a 1,2-diacyl-sn-glycero-3-phosphoethanolamine = an N-acylsphing-4-enine 1-phosphoethanolamine + a 1,2-diacyl-sn-glycerol. The enzyme catalyses 1,2-dihexadecanoyl-sn-glycero-3-phosphocholine + an N-acylsphing-4-enine = 1,2-dihexadecanoyl-sn-glycerol + a sphingomyelin. The catalysed reaction is 1-(9Z-octadecenoyl)-2-acyl-sn-3-glycerol + a sphingomyelin = a 1-(9Z-octadecenoyl)-2-acyl-sn-glycero-3-phosphocholine + an N-acylsphing-4-enine. It carries out the reaction N-hexadecanoylsphinganine + a 1,2-diacyl-sn-glycero-3-phosphocholine = N-hexadecanoyl-sphinganine-1-phosphocholine + a 1,2-diacyl-sn-glycerol. It catalyses the reaction N-hexadecanoyl-(4R)-hydroxysphinganine + a 1,2-diacyl-sn-glycero-3-phosphocholine = N-hexadecanoyl-(4R)-hydroxysphinganine-phosphocholine + a 1,2-diacyl-sn-glycerol. The enzyme catalyses N-hexadecanoylsphinganine + a 1,2-diacyl-sn-glycero-3-phosphoethanolamine = N-hexadecanoyl-sphinganine-1-phosphoethanolamine + a 1,2-diacyl-sn-glycerol. The catalysed reaction is N-hexadecanoyl-(4R)-hydroxysphinganine + a 1,2-diacyl-sn-glycero-3-phosphoethanolamine = N-hexadecanoyl-(4R)-hydroxysphinganine-1-phosphoethanolamine + a 1,2-diacyl-sn-glycerol. Its pathway is sphingolipid metabolism. With respect to regulation, inhibited by bacterial PC-phospholipase C inhibitor D609. In terms of biological role, sphingomyelin synthase that primarily contributes to sphingomyelin synthesis and homeostasis at the plasma membrane. Catalyzes the reversible transfer of phosphocholine moiety in sphingomyelin biosynthesis: in the forward reaction transfers phosphocholine head group of phosphatidylcholine (PC) on to ceramide (CER) to form ceramide phosphocholine (sphingomyelin, SM) and diacylglycerol (DAG) as by-product, and in the reverse reaction transfers phosphocholine from SM to DAG to form PC and CER. The direction of the reaction appears to depend on the levels of CER and DAG in the plasma membrane. Does not use free phosphorylcholine or CDP-choline as donors. Can also transfer phosphoethanolamine head group of phosphatidylethanolamine (PE) on to ceramide (CER) to form ceramide phosphoethanolamine (CPE). Regulates receptor-mediated signal transduction via mitogenic DAG and proapoptotic CER, as well as via SM, a structural component of membrane rafts that serve as platforms for signal transduction and protein sorting. To a lesser extent, plays a role in secretory transport via regulation of DAG pool at the Golgi apparatus and its downstream effects on PRKD1. Required for normal bone matrix mineralization. The polypeptide is Phosphatidylcholine:ceramide cholinephosphotransferase 2 (Homo sapiens (Human)).